Here is a 289-residue protein sequence, read N- to C-terminus: Cell division protein ZipA (289 aa).

Position 1 (M1) is a topological domain, periplasmic. Residues 2-22 traverse the membrane as a helical segment; that stretch reads EIGLREWLIVIGIIVIAGILF. Residues 23-289 lie on the Cytoplasmic side of the membrane; that stretch reads DGWRRMRGSK…ERRALTQRRG (267 aa). A disordered region spans residues 48–141; sequence DEEETTSAEV…KPAQRITEDK (94 aa). 3 stretches are compositionally biased toward basic and acidic residues: residues 64–77, 85–106, and 123–141; these read LDTH…EHDL, REGK…KDEP, and GRDD…TEDK.

It belongs to the ZipA family. In terms of assembly, interacts with FtsZ via their C-terminal domains.

The protein resides in the cell inner membrane. Essential cell division protein that stabilizes the FtsZ protofilaments by cross-linking them and that serves as a cytoplasmic membrane anchor for the Z ring. Also required for the recruitment to the septal ring of downstream cell division proteins. The sequence is that of Cell division protein ZipA from Pseudomonas savastanoi pv. phaseolicola (strain 1448A / Race 6) (Pseudomonas syringae pv. phaseolicola (strain 1448A / Race 6)).